The following is a 192-amino-acid chain: dCTP deaminase, dUMP-forming (192 aa).

Residues 101–106 (KSSLGR), D119, 127–129 (TLE), Q148, Y162, and Q174 contribute to the dCTP site. Catalysis depends on E129, which acts as the Proton donor/acceptor. Residues 169-192 (SRYQGQRGPTPSRSWQSWRTWPTR) are disordered. A compositionally biased stretch (polar residues) spans 171–192 (YQGQRGPTPSRSWQSWRTWPTR).

Belongs to the dCTP deaminase family. As to quaternary structure, homotrimer.

The enzyme catalyses dCTP + 2 H2O = dUMP + NH4(+) + diphosphate. Its pathway is pyrimidine metabolism; dUMP biosynthesis; dUMP from dCTP: step 1/1. Bifunctional enzyme that catalyzes both the deamination of dCTP to dUTP and the hydrolysis of dUTP to dUMP without releasing the toxic dUTP intermediate. The sequence is that of dCTP deaminase, dUMP-forming from Salinispora tropica (strain ATCC BAA-916 / DSM 44818 / JCM 13857 / NBRC 105044 / CNB-440).